A 257-amino-acid polypeptide reads, in one-letter code: Type I iodothyronine deiodinase (257 aa).

The Extracellular segment spans residues 1–12; that stretch reads MGLPGLGLLLKR. A helical; Signal-anchor for type III membrane protein transmembrane segment spans residues 13–33; that stretch reads FGVLVRVALKVAVGKVLLTLW. Residues 34 to 257 are Cytoplasmic-facing; it reads PSAIRPHLLA…CRSSAQSPRL (224 aa). The active site involves Sec-126. A non-standard amino acid (selenocysteine) is located at residue Sec-126.

This sequence belongs to the iodothyronine deiodinase family. Predominantly monomer. Can form homodimers but homodimerization is not essential for enzyme activity. Liver specific.

The protein resides in the cell membrane. The protein localises to the endoplasmic reticulum membrane. It is found in the basolateral cell membrane. The catalysed reaction is 3,3',5-triiodo-L-thyronine + iodide + A + H(+) = L-thyroxine + AH2. The enzyme catalyses 3,3',5'-triiodo-L-thyronine + iodide + A + H(+) = L-thyroxine + AH2. It catalyses the reaction 3,3'-diiodo-L-thyronine + iodide + A + H(+) = 3,3',5'-triiodo-L-thyronine + AH2. It carries out the reaction 3,3'-diiodo-L-thyronine + iodide + A + H(+) = 3,3',5-triiodo-L-thyronine + AH2. The catalysed reaction is 3'-iodo-L-thyronine + iodide + A + H(+) = 3',5'-diiodo-L-thyronine + AH2. The enzyme catalyses 3-iodo-L-thyronine + iodide + A + H(+) = 3,5-diiodo-L-thyronine + AH2. It catalyses the reaction 3-iodo-L-thyronine + iodide + A + H(+) = 3,3'-diiodo-L-thyronine + AH2. It carries out the reaction 3,3'-diiodothyronamine + iodide + A + H(+) = 3,3',5'-triiodothyronamine + AH2. The catalysed reaction is 3'-iodothyronamine + iodide + A + H(+) = 3',5'-diiodothyronamine + AH2. The enzyme catalyses 3-iodothyronamine + iodide + A + H(+) = 3,3'-diiodothyronamine + AH2. It catalyses the reaction 3,3'-diiodothyronamine + iodide + A + H(+) = 3,3',5-triiodothyronamine + AH2. It carries out the reaction 3-iodothyronamine + iodide + A + H(+) = 3,5-diiodothyronamine + AH2. The catalysed reaction is 3,3'-diiodo-L-thyronine sulfate + iodide + A + H(+) = 3,3',5'-triiodo-L-thyronine sulfate + AH2. The enzyme catalyses 3,3',5'-triiodo-L-thyronine sulfate + iodide + A + H(+) = L-thyroxine sulfate + AH2. It catalyses the reaction 3,3'-diiodo-L-thyronine sulfate + iodide + A + H(+) = 3,3',5-triiodo-L-thyronine sulfate + AH2. In terms of biological role, plays a crucial role in the metabolism of thyroid hormones (TH) and has specific roles in TH activation and inactivation by deiodination. Catalyzes the deiodination of L-thyroxine (T4) to 3,5,3'-triiodothyronine (T3) and 3',5'-diiodothyronine (3',5'-T2) to 3'-monoiodothyronine (3'-T1) via outer-ring deiodination (ORD). Catalyzes the deiodination of T4 to 3,3',5'-triiodothyronine (rT3), T3 to 3,3'-diiodothyronine (3,3'-T2), 3,5-diiodothyronine (3,5-T2) to 3-monoiodothyronine (3-T1) and 3,3'-T2 to 3-T1 via inner-ring deiodination (IRD). Catalyzes the deiodination of rT3 to 3,3'-T2 via ORD. Catalyzes the phenolic ring deiodinations of 3,3',5'-triiodothyronamine, 3',5'-diiodothyronamine and 3,3'-diiodothyronamine as well as tyrosyl ring deiodinations of 3,5,3'-triiodothyronamine and 3,5-diiodothyronamine. Catalyzes the deiodination of L-thyroxine sulfate and 3,3',5-triiodo-L-thyronine sulfate via IRD and of 3,3',5'-triiodo-L-thyronine sulfate via ORD. This chain is Type I iodothyronine deiodinase (DIO1), found in Suncus murinus (Asian house shrew).